Here is a 252-residue protein sequence, read N- to C-terminus: 4-hydroxy-tetrahydrodipicolinate reductase (252 aa).

Residue 8–13 participates in NAD(+) binding; sequence GALGRM. R36 is a binding site for NADP(+). Residues 89-91 and 114-117 each bind NAD(+); these read GTT and SSNF. H146 acts as the Proton donor/acceptor in catalysis. H147 contributes to the (S)-2,3,4,5-tetrahydrodipicolinate binding site. The active-site Proton donor is the K150. 156-157 provides a ligand contact to (S)-2,3,4,5-tetrahydrodipicolinate; sequence GT.

The protein belongs to the DapB family.

The protein resides in the cytoplasm. It carries out the reaction (S)-2,3,4,5-tetrahydrodipicolinate + NAD(+) + H2O = (2S,4S)-4-hydroxy-2,3,4,5-tetrahydrodipicolinate + NADH + H(+). The enzyme catalyses (S)-2,3,4,5-tetrahydrodipicolinate + NADP(+) + H2O = (2S,4S)-4-hydroxy-2,3,4,5-tetrahydrodipicolinate + NADPH + H(+). It participates in amino-acid biosynthesis; L-lysine biosynthesis via DAP pathway; (S)-tetrahydrodipicolinate from L-aspartate: step 4/4. Its function is as follows. Catalyzes the conversion of 4-hydroxy-tetrahydrodipicolinate (HTPA) to tetrahydrodipicolinate. This is 4-hydroxy-tetrahydrodipicolinate reductase from Methanoculleus marisnigri (strain ATCC 35101 / DSM 1498 / JR1).